We begin with the raw amino-acid sequence, 439 residues long: Enolase 1-1 (439 aa).

Position 85 is a phosphothreonine (Thr-85). Substrate-binding residues include His-159 and Glu-168. Catalysis depends on Glu-211, which acts as the Proton donor. Asp-246 contacts Mg(2+). Phosphoserine occurs at positions 249 and 250. Tyr-253 is modified (phosphotyrosine). The substrate site is built by Glu-295 and Asp-320. Positions 295 and 320 each coordinate Mg(2+). Lys-345 (proton acceptor) is an active-site residue. Residue Ser-351 is modified to Phosphoserine. At Thr-353 the chain carries Phosphothreonine. Residue Ser-355 is modified to Phosphoserine. Residues 372–375 (SHRS) and Lys-396 contribute to the substrate site. Ser-421 is modified (phosphoserine).

This sequence belongs to the enolase family. In terms of assembly, homodimer. Mg(2+) is required as a cofactor.

It is found in the cytoplasm. It catalyses the reaction (2R)-2-phosphoglycerate = phosphoenolpyruvate + H2O. Its pathway is carbohydrate degradation; glycolysis; pyruvate from D-glyceraldehyde 3-phosphate: step 4/5. The chain is Enolase 1-1 (eno101) from Schizosaccharomyces pombe (strain 972 / ATCC 24843) (Fission yeast).